The chain runs to 685 residues: MPDLLIELFSEEIPARMQARARGDLKKLVTDGLVEAGLTYKSAGAFSTPRRLALAIEGLTAQSPTTREERKGPRTDAPEAALEGFLRSTGLTREQLEARDDKKGQVWFAVVTKPGRPAAEIVAEVLERAIRDFPWPKSMRWGSGSLRWVRPLHSIICLLSDESGASVVPLEIEGIGAGNTTRGHRFMAPDEIAVSGFEDYAAKLRRARVMLDAAEREAAIRQEAANLAFARGWEIVPDEGLLSEVAGLVEWPVPLMGAIEDRFLALPPEVLQTSMKEHQKFFSARNPKTGRIEGFVTVANIETPDHGETILKGNQRVLAARLSDAAFFWENDLREAKAGMADWAEGLRSVTFQSKLGSQADRIARIAALALEIAPLVGADADQAEQAARIAKLDLRSAMVGEFPELQGIMGRYYALEAGLPEPVADAARDHYSPLGPSDAVPSAPVSVAVALADKLDTLTGFWAIDEKPTGSKDPFALRRAALGVIRLLLVNGVRANLGQTFAKARPDADAADLLAFFHDRLKVHLRDQGVRHDIIDAVLSMPGNDDLVLLVNRATALSDVLKTEDGTNLLQGLKRAGNILAQAEEMDGVEYSFGADPKFAETDEERTLFAALDKAEPAIREAVRLEDFQAATQGIASLRAPIDAFFEAVQINSDNQILRRNRLNLLSRIRDAGRLIADFGRIEG.

The segment at 58–77 (GLTAQSPTTREERKGPRTDA) is disordered. Over residues 66–77 (TREERKGPRTDA) the composition is skewed to basic and acidic residues.

The protein belongs to the class-II aminoacyl-tRNA synthetase family. As to quaternary structure, tetramer of two alpha and two beta subunits.

Its subcellular location is the cytoplasm. It catalyses the reaction tRNA(Gly) + glycine + ATP = glycyl-tRNA(Gly) + AMP + diphosphate. This is Glycine--tRNA ligase beta subunit from Paracoccus denitrificans (strain Pd 1222).